Reading from the N-terminus, the 155-residue chain is Endoribonuclease YbeY (155 aa).

Zn(2+) is bound by residues His-114, His-118, and His-124.

It belongs to the endoribonuclease YbeY family. It depends on Zn(2+) as a cofactor.

It is found in the cytoplasm. Its function is as follows. Single strand-specific metallo-endoribonuclease involved in late-stage 70S ribosome quality control and in maturation of the 3' terminus of the 16S rRNA. The polypeptide is Endoribonuclease YbeY (Baumannia cicadellinicola subsp. Homalodisca coagulata).